Here is a 254-residue protein sequence, read N- to C-terminus: Adenosylcobinamide-GDP ribazoletransferase (254 aa).

Transmembrane regions (helical) follow at residues 27-47 (SSLYWFPVVGLVIGGIVVLLA), 50-70 (GMGVGWPELAAVLALLGGLIL), 104-124 (VGSFGSLALIGVMLFKWICLL), 131-151 (AYGMIAAGAVLSRTAQVLLAA), 170-190 (AGWPHLLVASISGVVLLFVLL), 194-214 (LAPSLILLFGSVVALFFVGWL), and 233-253 (LVEAAVWLLAALWLKGLFWAI).

The protein belongs to the CobS family. Mg(2+) serves as cofactor.

It localises to the cell inner membrane. The enzyme catalyses alpha-ribazole + adenosylcob(III)inamide-GDP = adenosylcob(III)alamin + GMP + H(+). The catalysed reaction is alpha-ribazole 5'-phosphate + adenosylcob(III)inamide-GDP = adenosylcob(III)alamin 5'-phosphate + GMP + H(+). Its pathway is cofactor biosynthesis; adenosylcobalamin biosynthesis; adenosylcobalamin from cob(II)yrinate a,c-diamide: step 7/7. Joins adenosylcobinamide-GDP and alpha-ribazole to generate adenosylcobalamin (Ado-cobalamin). Also synthesizes adenosylcobalamin 5'-phosphate from adenosylcobinamide-GDP and alpha-ribazole 5'-phosphate. The sequence is that of Adenosylcobinamide-GDP ribazoletransferase from Chlorobaculum tepidum (strain ATCC 49652 / DSM 12025 / NBRC 103806 / TLS) (Chlorobium tepidum).